The chain runs to 510 residues: 2,3-bisphosphoglycerate-independent phosphoglycerate mutase (510 aa).

Mn(2+) contacts are provided by aspartate 13 and serine 63. Serine 63 acts as the Phosphoserine intermediate in catalysis. Substrate-binding positions include histidine 124, 154-155, arginine 186, arginine 192, 262-265, and lysine 334; these read RD and RADR. Aspartate 401, histidine 405, aspartate 442, histidine 443, and histidine 461 together coordinate Mn(2+).

This sequence belongs to the BPG-independent phosphoglycerate mutase family. In terms of assembly, monomer. Requires Mn(2+) as cofactor.

It catalyses the reaction (2R)-2-phosphoglycerate = (2R)-3-phosphoglycerate. It functions in the pathway carbohydrate degradation; glycolysis; pyruvate from D-glyceraldehyde 3-phosphate: step 3/5. Functionally, catalyzes the interconversion of 2-phosphoglycerate and 3-phosphoglycerate. The protein is 2,3-bisphosphoglycerate-independent phosphoglycerate mutase of Vibrio atlanticus (strain LGP32) (Vibrio splendidus (strain Mel32)).